Consider the following 129-residue polypeptide: Follitropin subunit beta (129 aa).

An N-terminal signal peptide occupies residues 1–18 (MKSVQLCLLLWCWRAICC). 6 cysteine pairs are disulfide-bonded: Cys-21/Cys-69, Cys-35/Cys-84, Cys-38/Cys-122, Cys-46/Cys-100, Cys-50/Cys-102, and Cys-105/Cys-112. N-linked (GlcNAc...) asparagine glycans are attached at residues Asn-25 and Asn-42.

This sequence belongs to the glycoprotein hormones subunit beta family. As to quaternary structure, heterodimer. The active follitropin is a heterodimer composed of an alpha chain/CGA shared with other hormones and a unique beta chain/FSHB shown here.

The protein resides in the secreted. Its function is as follows. Together with the alpha chain CGA constitutes follitropin, the follicle-stimulating hormone, and provides its biological specificity to the hormone heterodimer. Binds FSHR, a G protein-coupled receptor, on target cells to activate downstream signaling pathways. Follitropin is involved in follicle development and spermatogenesis in reproductive organs. The chain is Follitropin subunit beta (FSHB) from Meriones unguiculatus (Mongolian jird).